The sequence spans 129 residues: Small ribosomal subunit protein uS11 (129 aa).

It belongs to the universal ribosomal protein uS11 family. As to quaternary structure, part of the 30S ribosomal subunit. Interacts with proteins S7 and S18. Binds to IF-3.

In terms of biological role, located on the platform of the 30S subunit, it bridges several disparate RNA helices of the 16S rRNA. Forms part of the Shine-Dalgarno cleft in the 70S ribosome. The sequence is that of Small ribosomal subunit protein uS11 from Bacillus anthracis (strain A0248).